Consider the following 330-residue polypeptide: 4-epi-cubebol synthase ((2E,6E)-farnesyl diphosphate cyclizing) (330 aa).

Residues aspartate 91 and glutamate 96 each coordinate Mg(2+). Positions 91-96 (DDAFCE) match the DDXXXE motif motif. Arginine 184 is a substrate binding site. Residues asparagine 230 and serine 234 each coordinate Mg(2+). Lysine 237 contacts substrate. Glutamate 238 serves as a coordination point for Mg(2+). Position 316–317 (316–317 (RY)) interacts with substrate.

Belongs to the terpene synthase family. Mg(2+) is required as a cofactor.

It catalyses the reaction (2E,6E)-farnesyl diphosphate + H2O = 4-epi-cubebol + diphosphate. It participates in secondary metabolite biosynthesis; terpenoid biosynthesis. In terms of biological role, catalyzes the conversion of (2E,6E)-farnesyl diphosphate (FPP) to yield the bicyclic sesquiterpenol 4-epi-cubebol via a 1,10-cyclization, which requires the abstraction of the pyrophosphate from FPP to yield a (E,E)-germacradienyl cation. The only accepted substrate is (2E,6E)-farnesyl diphosphate (FPP). The polypeptide is 4-epi-cubebol synthase ((2E,6E)-farnesyl diphosphate cyclizing) (Streptosporangium roseum (strain ATCC 12428 / DSM 43021 / JCM 3005 / KCTC 9067 / NCIMB 10171 / NRRL 2505 / NI 9100)).